Reading from the N-terminus, the 245-residue chain is Enolase-phosphatase E1 (245 aa).

Belongs to the HAD-like hydrolase superfamily. MasA/MtnC family. As to quaternary structure, monomer. Requires Mg(2+) as cofactor.

The catalysed reaction is 5-methylsulfanyl-2,3-dioxopentyl phosphate + H2O = 1,2-dihydroxy-5-(methylsulfanyl)pent-1-en-3-one + phosphate. The protein operates within amino-acid biosynthesis; L-methionine biosynthesis via salvage pathway; L-methionine from S-methyl-5-thio-alpha-D-ribose 1-phosphate: step 3/6. It functions in the pathway amino-acid biosynthesis; L-methionine biosynthesis via salvage pathway; L-methionine from S-methyl-5-thio-alpha-D-ribose 1-phosphate: step 4/6. In terms of biological role, bifunctional enzyme that catalyzes the enolization of 2,3-diketo-5-methylthiopentyl-1-phosphate (DK-MTP-1-P) into the intermediate 2-hydroxy-3-keto-5-methylthiopentenyl-1-phosphate (HK-MTPenyl-1-P), which is then dephosphorylated to form the acireductone 1,2-dihydroxy-3-keto-5-methylthiopentene (DHK-MTPene). This Prochlorococcus marinus (strain MIT 9313) protein is Enolase-phosphatase E1.